The sequence spans 188 residues: Inosine triphosphate pyrophosphatase (188 aa).

12–17 is a binding site for ITP; that stretch reads TGNANK. Glu40 provides a ligand contact to Mg(2+). Residues Lys52, 68 to 69, Lys85, 144 to 147, Lys165, and 170 to 171 each bind ITP; these read DT, FGWD, and HR.

It belongs to the HAM1 NTPase family. Homodimer. Mg(2+) is required as a cofactor. The cofactor is Mn(2+).

Its subcellular location is the cytoplasm. It localises to the nucleus. The enzyme catalyses ITP + H2O = IMP + diphosphate + H(+). It catalyses the reaction dITP + H2O = dIMP + diphosphate + H(+). The catalysed reaction is XTP + H2O = XMP + diphosphate + H(+). Its function is as follows. Pyrophosphatase that hydrolyzes non-canonical purine nucleotides such as inosine triphosphate (ITP), deoxyinosine triphosphate (dITP) or xanthosine 5'-triphosphate (XTP) to their respective monophosphate derivatives. The enzyme does not distinguish between the deoxy- and ribose forms. Probably excludes non-canonical purines from RNA and DNA precursor pools, thus preventing their incorporation into RNA and DNA and avoiding chromosomal lesions. This Podospora anserina (strain S / ATCC MYA-4624 / DSM 980 / FGSC 10383) (Pleurage anserina) protein is Inosine triphosphate pyrophosphatase.